The chain runs to 401 residues: Protein KlcB (401 aa).

The tract at residues 253 to 311 (AARSNAKGKAGGRERDPASAETAMRCSTAKADDCKAEAGPVSPEATMPGAGEASCSTAR) is disordered.

The chain is Protein KlcB (klcB) from Escherichia coli.